Consider the following 271-residue polypeptide: Pyrroline-5-carboxylate reductase (271 aa).

The protein belongs to the pyrroline-5-carboxylate reductase family.

The protein resides in the cytoplasm. It carries out the reaction L-proline + NADP(+) = (S)-1-pyrroline-5-carboxylate + NADPH + 2 H(+). The catalysed reaction is L-proline + NAD(+) = (S)-1-pyrroline-5-carboxylate + NADH + 2 H(+). It functions in the pathway amino-acid biosynthesis; L-proline biosynthesis; L-proline from L-glutamate 5-semialdehyde: step 1/1. Its function is as follows. Catalyzes the reduction of 1-pyrroline-5-carboxylate (PCA) to L-proline. This Staphylococcus aureus (strain Mu50 / ATCC 700699) protein is Pyrroline-5-carboxylate reductase.